Here is a 263-residue protein sequence, read N- to C-terminus: Purine nucleoside phosphorylase SE_0862 (263 aa).

Residues His79, Cys124, and His141 each coordinate Zn(2+).

It belongs to the purine nucleoside phosphorylase YfiH/LACC1 family. Homodimer. It depends on Cu(2+) as a cofactor. The cofactor is Zn(2+).

It carries out the reaction adenosine + phosphate = alpha-D-ribose 1-phosphate + adenine. The enzyme catalyses S-methyl-5'-thioadenosine + phosphate = 5-(methylsulfanyl)-alpha-D-ribose 1-phosphate + adenine. The catalysed reaction is inosine + phosphate = alpha-D-ribose 1-phosphate + hypoxanthine. It catalyses the reaction adenosine + H2O + H(+) = inosine + NH4(+). Functionally, purine nucleoside enzyme that catalyzes the phosphorolysis of adenosine and inosine nucleosides, yielding D-ribose 1-phosphate and the respective free bases, adenine and hypoxanthine. Also catalyzes the phosphorolysis of S-methyl-5'-thioadenosine into adenine and S-methyl-5-thio-alpha-D-ribose 1-phosphate. Also has adenosine deaminase activity. This is Purine nucleoside phosphorylase SE_0862 from Staphylococcus epidermidis (strain ATCC 12228 / FDA PCI 1200).